Reading from the N-terminus, the 529-residue chain is Bifunctional purine biosynthesis protein PurH (529 aa).

The region spanning 2–149 (TDLHPVRRAL…KNHAFVNVVV (148 aa)) is the MGS-like domain.

Belongs to the PurH family.

The enzyme catalyses (6R)-10-formyltetrahydrofolate + 5-amino-1-(5-phospho-beta-D-ribosyl)imidazole-4-carboxamide = 5-formamido-1-(5-phospho-D-ribosyl)imidazole-4-carboxamide + (6S)-5,6,7,8-tetrahydrofolate. It carries out the reaction IMP + H2O = 5-formamido-1-(5-phospho-D-ribosyl)imidazole-4-carboxamide. It functions in the pathway purine metabolism; IMP biosynthesis via de novo pathway; 5-formamido-1-(5-phospho-D-ribosyl)imidazole-4-carboxamide from 5-amino-1-(5-phospho-D-ribosyl)imidazole-4-carboxamide (10-formyl THF route): step 1/1. Its pathway is purine metabolism; IMP biosynthesis via de novo pathway; IMP from 5-formamido-1-(5-phospho-D-ribosyl)imidazole-4-carboxamide: step 1/1. The polypeptide is Bifunctional purine biosynthesis protein PurH (Ruegeria sp. (strain TM1040) (Silicibacter sp.)).